We begin with the raw amino-acid sequence, 1010 residues long: Contactin-1 (1010 aa).

Residues 1–19 (MRFFISHLVTLCFIFCVAD) form the signal peptide. Ig-like C2-type domains follow at residues 33-123 (PVFE…ATLS), 132-215 (PEEH…KSVF), 232-317 (PADI…ARVY), 322-398 (PEWV…AELK), 404-491 (PTFE…GVLE), and 496-592 (TRIT…LVVR). Intrachain disulfides connect cysteine 57–cysteine 106 and cysteine 150–cysteine 203. N-linked (GlcNAc...) asparagine glycosylation is found at asparagine 200 and asparagine 249. Cysteine 254 and cysteine 301 are oxidised to a cystine. Asparagine 329 is a glycosylation site (N-linked (GlcNAc...) asparagine). Cystine bridges form between cysteine 343/cysteine 382 and cysteine 427/cysteine 475. 4 N-linked (GlcNAc...) asparagine glycosylation sites follow: asparagine 448, asparagine 464, asparagine 485, and asparagine 512. The cysteines at positions 517 and 574 are disulfide-linked. N-linked (GlcNAc...) asparagine glycosylation occurs at asparagine 582. 4 Fibronectin type-III domains span residues 597–695 (PPGG…TEGA), 700–797 (APSD…SAQD), 802–897 (VPTD…APPS), and 899–990 (RPRI…TAGV). Over residues 679–689 (GTGEPSMPSQR) the composition is skewed to polar residues. The segment at 679–708 (GTGEPSMPSQRIRTEGAPPNVAPSDVGGGG) is disordered. Asparagine 924 carries N-linked (GlcNAc...) asparagine glycosylation. The GPI-anchor amidated serine moiety is linked to residue serine 984. A propeptide spans 985–1010 (GATAGVPTLLLGLVLPALGVLAYSGF) (removed in mature form).

This sequence belongs to the immunoglobulin superfamily. Contactin family. As to quaternary structure, interacts with TNR.

The protein localises to the cell membrane. Functionally, mediates cell surface interactions during nervous system development. Interaction with TNR enhances the neurite outgrowth. This Gallus gallus (Chicken) protein is Contactin-1 (CNTN1).